A 576-amino-acid chain; its full sequence is Vesicular glutamate transporter 1 (576 aa).

Residues Met1–Tyr63 are Cytoplasmic-facing. A helical membrane pass occupies residues Ile64–Gly84. The Vesicular segment spans residues Val85–Val116. The N-linked (GlcNAc...) asparagine glycan is linked to Asn93. A helical membrane pass occupies residues Gly117–Ile137. Residues Cys138–Lys140 are Cytoplasmic-facing. Residues Phe141–Ile161 traverse the membrane as a helical segment. Topologically, residues Pro162 to His168 are vesicular. A helical transmembrane segment spans residues Phe169 to Ala189. At Cys190 to Thr208 the chain is on the cytoplasmic side. The helical transmembrane segment at Thr209 to Val229 threads the bilayer. At Gln230 to Ser236 the chain is on the vesicular side. A helical membrane pass occupies residues Val237–Tyr257. Over Glu258 to Met302 the chain is Cytoplasmic. A helical membrane pass occupies residues Pro303–Ile323. Residues Ser324 to Gly341 are Vesicular-facing. Residues Leu342 to Ala362 traverse the membrane as a helical segment. At Asp363–Lys378 the chain is on the cytoplasmic side. A helical membrane pass occupies residues Met379–His399. Topologically, residues Ser400–Arg401 are vesicular. A helical transmembrane segment spans residues Gly402–Phe422. At Asn423–Ser435 the chain is on the cytoplasmic side. A helical membrane pass occupies residues Ile436–Val456. The Vesicular segment spans residues Gly457–Gln469. The chain crosses the membrane as a helical span at residues Tyr470–Ala490. Topologically, residues Ser491–Ser576 are cytoplasmic. Residues Ala517–Thr547 form a disordered region. Polar residues predominate over residues Gly534–Gly545.

This sequence belongs to the major facilitator superfamily. Sodium/anion cotransporter family. VGLUT subfamily.

Its subcellular location is the cytoplasmic vesicle. The protein resides in the secretory vesicle. The protein localises to the synaptic vesicle membrane. It is found in the cell membrane. It localises to the synapse. Its subcellular location is the synaptosome. It catalyses the reaction L-glutamate(out) = L-glutamate(in). The catalysed reaction is chloride(in) = chloride(out). The enzyme catalyses 3 Na(+)(out) + phosphate(out) = 3 Na(+)(in) + phosphate(in). It carries out the reaction phosphate(in) = phosphate(out). It catalyses the reaction K(+)(in) + H(+)(out) = K(+)(out) + H(+)(in). Its activity is regulated as follows. Chloride channel activity is allosterically activated by lumenal H(+) and Cl(-) leading to synaptic vesicles acidification. The L-glutamate transport activity is allosterically activated by lumenal H(+) and Cl(-). The allosteric activation by H(+) efficiently prevents non-vesicular efflux across the plasma membrane, thereby restricting L-glutamate transport activity to acidic membranes such as synaptic vesicles. Its function is as follows. Multifunctional transporter that transports L-glutamate as well as multiple ions such as chloride, proton, potassium, sodium and phosphate. At the synaptic vesicle membrane, mainly functions as an uniporter which transports preferentially L-glutamate but also phosphate from the cytoplasm into synaptic vesicles at presynaptic nerve terminals of excitatory neural cells. The L-glutamate or phosphate uniporter activity is electrogenic and is driven by the proton electrochemical gradient, mainly by the electrical gradient established by the vacuolar H(+)-ATPase across the synaptic vesicle membrane. In addition, functions as a chloride channel that allows a chloride permeation through the synaptic vesicle membrane that affects the proton electrochemical gradient and promotes synaptic vesicles acidification. Moreover, may function as a K(+)/H(+) antiport allowing to maintain the electrical gradient and to decrease chemical gradient and therefore sustain vesicular glutamate uptake. The vesicular K(+)/H(+) antiport activity is electroneutral. At the plasma membrane, following exocytosis, functions as a symporter of Na(+) and phosphate from the extracellular space to the cytoplasm allowing synaptic phosphate homeostasis regulation. The symporter activity is driven by an inside negative membrane potential and is electrogenic. Is necessary for synaptic signaling of visual-evoked responses from photoreceptors. This Xenopus tropicalis (Western clawed frog) protein is Vesicular glutamate transporter 1.